Here is a 419-residue protein sequence, read N- to C-terminus: L-rhamnose isomerase (419 aa).

Mn(2+) contacts are provided by histidine 262, aspartate 294, and aspartate 296.

The protein belongs to the rhamnose isomerase family. Homotetramer. Mn(2+) serves as cofactor.

Its subcellular location is the cytoplasm. The catalysed reaction is L-rhamnopyranose = L-rhamnulose. Its pathway is carbohydrate degradation; L-rhamnose degradation; glycerone phosphate from L-rhamnose: step 1/3. Its function is as follows. Catalyzes the interconversion of L-rhamnose and L-rhamnulose. The chain is L-rhamnose isomerase from Escherichia coli (strain SMS-3-5 / SECEC).